A 33-amino-acid polypeptide reads, in one-letter code: uncharacterized protein (33 aa).

The segment at 1–24 (MRTGTRCDLGELSHPRKTLPPRGM) is disordered.

This is an uncharacterized protein from Treponema pallidum (strain Nichols).